A 125-amino-acid chain; its full sequence is uncharacterized protein (125 aa).

Transmembrane regions (helical) follow at residues 22 to 44 (TPLM…NAAV) and 54 to 73 (YMGI…SVLM).

It belongs to the bacteriophage holin family. Cp-1 holin subfamily.

It is found in the cell membrane. This is an uncharacterized protein from Clostridium acetobutylicum (strain ATCC 824 / DSM 792 / JCM 1419 / IAM 19013 / LMG 5710 / NBRC 13948 / NRRL B-527 / VKM B-1787 / 2291 / W).